Reading from the N-terminus, the 341-residue chain is HMG box-containing protein C10F6.08c (341 aa).

The span at 68–77 (SEAKSREFGQ) shows a compositional bias: basic and acidic residues. Disordered regions lie at residues 68-195 (SEAK…SNAK) and 236-341 (LTEE…SSNA). Composition is skewed to polar residues over residues 116-157 (DTNV…QVVQ) and 165-177 (NTDP…ITNL). Low complexity predominate over residues 178–195 (KTESSKSSGAKKATSNAK). The HMG box DNA-binding region spans 195–263 (KITDTMLFNH…KAREARRRRS (69 aa)). 2 stretches are compositionally biased toward basic and acidic residues: residues 238–256 (EEEK…EKAR) and 269–304 (KLEK…GQKE). A phosphothreonine mark is found at T314 and T315. At S316 the chain carries Phosphoserine.

The protein resides in the nucleus. This chain is HMG box-containing protein C10F6.08c, found in Schizosaccharomyces pombe (strain 972 / ATCC 24843) (Fission yeast).